We begin with the raw amino-acid sequence, 542 residues long: Polysialoglycoprotein (542 aa).

A signal peptide spans 1–21 (MIMGGVRELLLVVMTVGVVKV). A propeptide spanning residues 22-120 (SCYPVGKSQK…TSEAATGPSG (99 aa)) is cleaved from the precursor. A disordered region spans residues 70–542 (EEYLETNEVE…GPSGDDAMDI (473 aa)). Residues 78-95 (VESQASPNHGSSPANDAL) show a composition bias toward polar residues. A compositionally biased stretch (basic and acidic residues) spans 97-106 (SEEKLRRVSS). A compositionally biased stretch (low complexity) spans 107–116 (DDAATSEAAT). Tandem repeats lie at residues 121 to 133 (DDAT…GPSG), 134 to 146 (DDAT…GPSG), 147 to 159 (DDAT…GPSG), 160 to 172 (DDAT…GPSG), 173 to 185 (DDAT…GPSG), 186 to 198 (DDAT…GPSG), 199 to 211 (DDAT…GPSG), 212 to 224 (DDAT…GPSG), 225 to 237 (DDAT…GPSG), 238 to 250 (DDAT…GPSG), 251 to 263 (DDAT…GPSG), 264 to 276 (DDAT…GPSG), 277 to 289 (DDAT…GPSG), 290 to 302 (DDAT…GPSG), 303 to 315 (DDAT…GPSG), 316 to 328 (DDAT…GPSG), 329 to 341 (DDAT…GPSG), 342 to 354 (DDAT…GPSG), 355 to 367 (DDAT…GPSG), 368 to 380 (DDAT…GPSG), 381 to 393 (DDAT…GPSG), 394 to 406 (DDAT…GPSG), 407 to 419 (DDAT…GPSG), 420 to 432 (DDAT…GPSG), 433 to 445 (DDAT…GPSG), 446 to 458 (DDAT…GPSG), 459 to 471 (DDAT…GPSG), 472 to 484 (DDAT…GPSG), 485 to 497 (DDAT…GPSG), 498 to 510 (DDAT…GPSG), 511 to 523 (DDAT…GPSG), and 524 to 536 (DDAT…GPSG). The segment at 121-536 (DDATSEAATG…TSEAATGPSG (416 aa)) is 32 X 13 AA tandem repeats of D-D-A-T-S-E-A-A-T-G-P-S-G. O-linked (GalNAc...) threonine glycosylation is present at Thr-124. Ser-125 carries an O-linked (GalNAc...) serine glycan. O-linked (GalNAc...) threonine glycans are attached at residues Thr-129 and Thr-137. Ser-138 is a glycosylation site (O-linked (GalNAc...) serine). O-linked (GalNAc...) threonine glycans are attached at residues Thr-142 and Thr-150. Ser-151 is a glycosylation site (O-linked (GalNAc...) serine). Residues Thr-155 and Thr-163 are each glycosylated (O-linked (GalNAc...) threonine). Ser-164 carries an O-linked (GalNAc...) serine glycan. O-linked (GalNAc...) threonine glycosylation is found at Thr-168 and Thr-176. The O-linked (GalNAc...) serine glycan is linked to Ser-177. O-linked (GalNAc...) threonine glycosylation is found at Thr-181 and Thr-189. Residue Ser-190 is glycosylated (O-linked (GalNAc...) serine). Residues Thr-194 and Thr-202 are each glycosylated (O-linked (GalNAc...) threonine). Ser-203 carries O-linked (GalNAc...) serine glycosylation. Thr-207 and Thr-215 each carry an O-linked (GalNAc...) threonine glycan. Ser-216 carries an O-linked (GalNAc...) serine glycan. Thr-220 and Thr-228 each carry an O-linked (GalNAc...) threonine glycan. An O-linked (GalNAc...) serine glycan is attached at Ser-229. Residues Thr-233 and Thr-241 are each glycosylated (O-linked (GalNAc...) threonine). The O-linked (GalNAc...) serine glycan is linked to Ser-242. 2 O-linked (GalNAc...) threonine glycosylation sites follow: Thr-246 and Thr-254. Ser-255 carries O-linked (GalNAc...) serine glycosylation. Thr-259 and Thr-267 each carry an O-linked (GalNAc...) threonine glycan. O-linked (GalNAc...) serine glycosylation is present at Ser-268. Thr-272 and Thr-280 each carry an O-linked (GalNAc...) threonine glycan. Ser-281 carries an O-linked (GalNAc...) serine glycan. Thr-285 and Thr-293 each carry an O-linked (GalNAc...) threonine glycan. A glycan (O-linked (GalNAc...) serine) is linked at Ser-294. Residues Thr-298 and Thr-306 are each glycosylated (O-linked (GalNAc...) threonine). An O-linked (GalNAc...) serine glycan is attached at Ser-307. Thr-311 and Thr-319 each carry an O-linked (GalNAc...) threonine glycan. A glycan (O-linked (GalNAc...) serine) is linked at Ser-320. Residues Thr-324 and Thr-332 are each glycosylated (O-linked (GalNAc...) threonine). Ser-333 carries an O-linked (GalNAc...) serine glycan. 2 O-linked (GalNAc...) threonine glycosylation sites follow: Thr-337 and Thr-345. An O-linked (GalNAc...) serine glycan is attached at Ser-346. O-linked (GalNAc...) threonine glycosylation is found at Thr-350 and Thr-358. Ser-359 is a glycosylation site (O-linked (GalNAc...) serine). 2 O-linked (GalNAc...) threonine glycosylation sites follow: Thr-363 and Thr-371. The O-linked (GalNAc...) serine glycan is linked to Ser-372. 2 O-linked (GalNAc...) threonine glycosylation sites follow: Thr-376 and Thr-384. An O-linked (GalNAc...) serine glycan is attached at Ser-385. O-linked (GalNAc...) threonine glycans are attached at residues Thr-389 and Thr-397. Ser-398 carries an O-linked (GalNAc...) serine glycan. 2 O-linked (GalNAc...) threonine glycosylation sites follow: Thr-402 and Thr-410. An O-linked (GalNAc...) serine glycan is attached at Ser-411. Residues Thr-415 and Thr-423 are each glycosylated (O-linked (GalNAc...) threonine). O-linked (GalNAc...) serine glycosylation is present at Ser-424. O-linked (GalNAc...) threonine glycans are attached at residues Thr-428 and Thr-436. Ser-437 carries O-linked (GalNAc...) serine glycosylation. Residues Thr-441 and Thr-449 are each glycosylated (O-linked (GalNAc...) threonine). An O-linked (GalNAc...) serine glycan is attached at Ser-450. 2 O-linked (GalNAc...) threonine glycosylation sites follow: Thr-454 and Thr-462. Ser-463 carries O-linked (GalNAc...) serine glycosylation. Residues Thr-467 and Thr-475 are each glycosylated (O-linked (GalNAc...) threonine). An O-linked (GalNAc...) serine glycan is attached at Ser-476. O-linked (GalNAc...) threonine glycosylation is found at Thr-480 and Thr-488. Ser-489 is a glycosylation site (O-linked (GalNAc...) serine). Thr-493 and Thr-501 each carry an O-linked (GalNAc...) threonine glycan. O-linked (GalNAc...) serine glycosylation is present at Ser-502. Thr-506 and Thr-514 each carry an O-linked (GalNAc...) threonine glycan. Ser-515 is a glycosylation site (O-linked (GalNAc...) serine). 2 O-linked (GalNAc...) threonine glycosylation sites follow: Thr-519 and Thr-527. Ser-528 carries O-linked (GalNAc...) serine glycosylation. A glycan (O-linked (GalNAc...) threonine) is linked at Thr-532. Positions 537–542 (DDAMDI) are excised as a propeptide.

In terms of processing, most sialic acid residues exist in the form of polysialyl groups partly capped with deaminoneuraminic acid. In terms of tissue distribution, cortical alveoli of immature ovaries.

Its function is as follows. In response to egg activation, PSGP is discharged by exocytosis into the perivitelline space, where it undergoes rapid proteolysis into glycotridecapeptides. During fertilization and/or early development the glycotridecapeptides prevent polyspermy or are involved in the formation of a fertilization membrane. In Oncorhynchus mykiss (Rainbow trout), this protein is Polysialoglycoprotein.